Consider the following 639-residue polypeptide: Tetracycline resistance protein TetM from transposon Tn5251 (639 aa).

Residues M1–T242 enclose the tr-type G domain. GTP contacts are provided by residues A10–T17, D74–H78, and N128–D131.

This sequence belongs to the TRAFAC class translation factor GTPase superfamily. Classic translation factor GTPase family. TetM/TetO subfamily.

In terms of biological role, abolishes the inhibitory effect of tetracyclin on protein synthesis by a non-covalent modification of the ribosomes. In Streptococcus pneumoniae, this protein is Tetracycline resistance protein TetM from transposon Tn5251 (tetM(5251)).